Reading from the N-terminus, the 126-residue chain is Large ribosomal subunit protein bL17 (126 aa).

This sequence belongs to the bacterial ribosomal protein bL17 family. Part of the 50S ribosomal subunit. Contacts protein L32.

The protein is Large ribosomal subunit protein bL17 of Xylella fastidiosa (strain 9a5c).